A 22-amino-acid chain; its full sequence is Hemocyanin subunit 4 (22 aa).

It belongs to the tyrosinase family. Hemocyanin subfamily. In terms of tissue distribution, hemolymph.

The protein localises to the secreted. It is found in the extracellular space. Its function is as follows. Hemocyanins are copper-containing oxygen carriers occurring freely dissolved in the hemolymph of many mollusks and arthropods. The sequence is that of Hemocyanin subunit 4 from Homarus americanus (American lobster).